A 239-amino-acid polypeptide reads, in one-letter code: MNPNPQSTSSNFHQTELDKFAALANRWWDADGPQKPLHALNPVRLDYVAARVALPGARVLDVGCGGGLLSEAMARLGAQVTAIDLAPELVKVARLHSLESSVQVDYRVQSVEDLAAEQPGSFDAVTCMEMLEHVPDPLAIIRACASLLKPGGTLFLSTLNRTPAAFALAVVGAEYIARLLPKGTHHYKDFIKPSELAAWLRTAELQLQDVSGMLYEPWRNRARLSSRTEVNYLACAVKP.

Arginine 44, glycine 63, aspartate 84, and methionine 128 together coordinate S-adenosyl-L-methionine.

Belongs to the methyltransferase superfamily. UbiG/COQ3 family.

The enzyme catalyses a 3-demethylubiquinol + S-adenosyl-L-methionine = a ubiquinol + S-adenosyl-L-homocysteine + H(+). The catalysed reaction is a 3-(all-trans-polyprenyl)benzene-1,2-diol + S-adenosyl-L-methionine = a 2-methoxy-6-(all-trans-polyprenyl)phenol + S-adenosyl-L-homocysteine + H(+). Its pathway is cofactor biosynthesis; ubiquinone biosynthesis. Its function is as follows. O-methyltransferase that catalyzes the 2 O-methylation steps in the ubiquinone biosynthetic pathway. The polypeptide is Ubiquinone biosynthesis O-methyltransferase (Xanthomonas campestris pv. campestris (strain 8004)).